Consider the following 184-residue polypeptide: Large ribosomal subunit protein uL5 (184 aa).

Belongs to the universal ribosomal protein uL5 family. In terms of assembly, part of the 50S ribosomal subunit; part of the 5S rRNA/L5/L18/L25 subcomplex. Contacts the 5S rRNA and the P site tRNA. Forms a bridge to the 30S subunit in the 70S ribosome.

Functionally, this is one of the proteins that bind and probably mediate the attachment of the 5S RNA into the large ribosomal subunit, where it forms part of the central protuberance. In the 70S ribosome it contacts protein S13 of the 30S subunit (bridge B1b), connecting the 2 subunits; this bridge is implicated in subunit movement. Contacts the P site tRNA; the 5S rRNA and some of its associated proteins might help stabilize positioning of ribosome-bound tRNAs. In Thermotoga sp. (strain RQ2), this protein is Large ribosomal subunit protein uL5.